We begin with the raw amino-acid sequence, 729 residues long: Fatty acid oxidation complex subunit alpha (729 aa).

An enoyl-CoA hydratase/isomerase region spans residues 1 to 189 (MLYKGDTLYL…KIGLVDGVVK (189 aa)). D296 is a substrate binding site. The 3-hydroxyacyl-CoA dehydrogenase stretch occupies residues 311–729 (ETPKQAAVLG…ARPVGDLKTA (419 aa)). Residues M324, D343, 400-402 (VVE), K407, and S429 contribute to the NAD(+) site. The For 3-hydroxyacyl-CoA dehydrogenase activity role is filled by H450. Residue N453 coordinates NAD(+). 2 residues coordinate substrate: N500 and Y660. A disordered region spans residues 708-729 (RHNEPYYPPVEPARPVGDLKTA).

The protein in the N-terminal section; belongs to the enoyl-CoA hydratase/isomerase family. In the C-terminal section; belongs to the 3-hydroxyacyl-CoA dehydrogenase family. In terms of assembly, heterotetramer of two alpha chains (FadB) and two beta chains (FadA).

The enzyme catalyses a (3S)-3-hydroxyacyl-CoA + NAD(+) = a 3-oxoacyl-CoA + NADH + H(+). It catalyses the reaction a (3S)-3-hydroxyacyl-CoA = a (2E)-enoyl-CoA + H2O. The catalysed reaction is a 4-saturated-(3S)-3-hydroxyacyl-CoA = a (3E)-enoyl-CoA + H2O. It carries out the reaction (3S)-3-hydroxybutanoyl-CoA = (3R)-3-hydroxybutanoyl-CoA. The enzyme catalyses a (3Z)-enoyl-CoA = a 4-saturated (2E)-enoyl-CoA. It catalyses the reaction a (3E)-enoyl-CoA = a 4-saturated (2E)-enoyl-CoA. It participates in lipid metabolism; fatty acid beta-oxidation. In terms of biological role, involved in the aerobic and anaerobic degradation of long-chain fatty acids via beta-oxidation cycle. Catalyzes the formation of 3-oxoacyl-CoA from enoyl-CoA via L-3-hydroxyacyl-CoA. It can also use D-3-hydroxyacyl-CoA and cis-3-enoyl-CoA as substrate. The chain is Fatty acid oxidation complex subunit alpha from Escherichia coli (strain SMS-3-5 / SECEC).